Reading from the N-terminus, the 204-residue chain is Cytochrome c biogenesis ATP-binding export protein CcmA (204 aa).

An ABC transporter domain is found at 3–204 (LTVTDLAIAR…PLDDPDGDFL (202 aa)). 35–42 (GPNGAGKT) is a binding site for ATP.

It belongs to the ABC transporter superfamily. CcmA exporter (TC 3.A.1.107) family. As to quaternary structure, the complex is composed of two ATP-binding proteins (CcmA) and two transmembrane proteins (CcmB).

Its subcellular location is the cell membrane. The enzyme catalyses heme b(in) + ATP + H2O = heme b(out) + ADP + phosphate + H(+). Part of the ABC transporter complex CcmAB involved in the biogenesis of c-type cytochromes; once thought to export heme, this seems not to be the case, but its exact role is uncertain. Responsible for energy coupling to the transport system. The polypeptide is Cytochrome c biogenesis ATP-binding export protein CcmA (Ruegeria pomeroyi (strain ATCC 700808 / DSM 15171 / DSS-3) (Silicibacter pomeroyi)).